The primary structure comprises 121 residues: Type II secretion system protein I (121 aa).

Positions 1-6 are cleaved as a propeptide — leader sequence; it reads MNKQKG. Position 7 is an N-methylmethionine (methionine 7). Residues 7–27 form a helical membrane-spanning segment; that stretch reads MTLLEVLVALAIFSLAGLTLL.

The protein belongs to the GSP I family. In terms of assembly, type II secretion is composed of four main components: the outer membrane complex, the inner membrane complex, the cytoplasmic secretion ATPase and the periplasm-spanning pseudopilus. Interacts with core component PulG. Interacts with pseudopilins PulJ and PulK. Post-translationally, cleaved by prepilin peptidase. In terms of processing, methylated by prepilin peptidase at the amino group of the N-terminal methionine once the leader sequence is cleaved by prepilin peptidase.

Its subcellular location is the cell inner membrane. Functionally, component of the type II secretion system required for the energy-dependent secretion of extracellular factors such as proteases and toxins from the periplasm. Part of the pseudopilus tip complex that is critical for the recognition and binding of secretion substrates. This Klebsiella michiganensis (strain ATCC 8724 / DSM 4798 / JCM 20051 / NBRC 3318 / NRRL B-199 / KCTC 1686 / BUCSAV 143 / CCM 1901) protein is Type II secretion system protein I (pulI).